The following is a 511-amino-acid chain: Bifunctional purine biosynthesis protein PurH (511 aa).

An MGS-like domain is found at 1-145 (MKKRALVSVS…KNHKFVSVIV (145 aa)).

The protein belongs to the PurH family.

It catalyses the reaction (6R)-10-formyltetrahydrofolate + 5-amino-1-(5-phospho-beta-D-ribosyl)imidazole-4-carboxamide = 5-formamido-1-(5-phospho-D-ribosyl)imidazole-4-carboxamide + (6S)-5,6,7,8-tetrahydrofolate. The catalysed reaction is IMP + H2O = 5-formamido-1-(5-phospho-D-ribosyl)imidazole-4-carboxamide. The protein operates within purine metabolism; IMP biosynthesis via de novo pathway; 5-formamido-1-(5-phospho-D-ribosyl)imidazole-4-carboxamide from 5-amino-1-(5-phospho-D-ribosyl)imidazole-4-carboxamide (10-formyl THF route): step 1/1. It functions in the pathway purine metabolism; IMP biosynthesis via de novo pathway; IMP from 5-formamido-1-(5-phospho-D-ribosyl)imidazole-4-carboxamide: step 1/1. This Bacillus cereus (strain Q1) protein is Bifunctional purine biosynthesis protein PurH.